Consider the following 547-residue polypeptide: Carboxypeptidase N subunit 2 (547 aa).

A signal peptide spans 1-21; that stretch reads MFPGAWLCWVSLLLLARLTQP. The LRRNT domain maps to 22–49; the sequence is CPVGCDCFGREVFCSDEQLADIPPDIPP. Residues N74, N111, and N119 are each glycosylated (N-linked (GlcNAc...) asparagine). LRR repeat units lie at residues 98 to 119, 122 to 143, 146 to 167, 170 to 191, 194 to 215, 218 to 239, 242 to 263, 266 to 287, 290 to 311, 314 to 335, 338 to 359, and 362 to 383; these read RLQD…IFSN, SLEK…LFCH, ILES…LFQS, DLRT…AFQS, GLQM…ALGS, SLQE…LFSQ, SLEM…LFSS, NLTF…LFAH, GLLH…AFTN, RLVS…VFRN, QLVK…LFHN, and RLQL…IFDT. N266 and N311 each carry an N-linked (GlcNAc...) asparagine glycan. N348, N359, and N367 each carry an N-linked (GlcNAc...) asparagine glycan. One can recognise an LRRCT domain in the interval 395–447; it reads NPWQCDCHLSYLTSWLRLYNNQISNTHTFCAGPAYLKGQLVPNLKQEQLICPV. N520 carries an N-linked (GlcNAc...) asparagine glycan.

As to quaternary structure, tetramer of two catalytic chains and two glycosylated inactive chains.

The protein resides in the secreted. Its function is as follows. The 83 kDa subunit binds and stabilizes the catalytic subunit at 37 degrees Celsius and keeps it in circulation. Under some circumstances it may be an allosteric modifier of the catalytic subunit. This is Carboxypeptidase N subunit 2 (Cpn2) from Mus musculus (Mouse).